We begin with the raw amino-acid sequence, 512 residues long: Zinc metalloprotease mde10 (512 aa).

Residues 1–15 (MRLVLLFSCVLAVSS) form the signal peptide. The N-linked (GlcNAc...) asparagine glycan is linked to Asn-35. In terms of domain architecture, Peptidase M12B spans 65-306 (QTLWIGVVAD…KYVSLSCLSK (242 aa)). His-229 lines the Zn(2+) pocket. The active site involves Glu-230. 2 residues coordinate Zn(2+): His-233 and His-239. Cystine bridges form between Cys-246–Cys-254 and Cys-374–Cys-394. The 88-residue stretch at 315–402 (LGTCGNGIVE…KCPVDENWDD (88 aa)) folds into the Disintegrin domain. N-linked (GlcNAc...) asparagine glycosylation is present at Asn-432.

The cofactor is Zn(2+). In terms of processing, glycosylated.

It localises to the endoplasmic reticulum. The protein localises to the spore wall. Functionally, has a role in the development of the spore envelope. The polypeptide is Zinc metalloprotease mde10 (mde10) (Schizosaccharomyces pombe (strain 972 / ATCC 24843) (Fission yeast)).